Reading from the N-terminus, the 167-residue chain is MMSTETVPPVKRVQGHKGYKNRRRLSRELALQGIYQWQVTGGNARDIGMQLQQVSFFSKADGPYFSDLLQGVLEHAADLQTQIQPHLDRQIAELSPVECSILLIGTYEMVYRPEIPCRAIINEAIELAKSYGGTDGHKYVNGVLDKLATRLRAVELQHPPARNKDSG.

It belongs to the NusB family.

In terms of biological role, involved in transcription antitermination. Required for transcription of ribosomal RNA (rRNA) genes. Binds specifically to the boxA antiterminator sequence of the ribosomal RNA (rrn) operons. The chain is Transcription antitermination protein NusB from Nitrosomonas europaea (strain ATCC 19718 / CIP 103999 / KCTC 2705 / NBRC 14298).